The primary structure comprises 230 residues: MNDADVSKQIQQMVRFIRQEAEEKANEISVSAEEEFNIEKLQLVEAEKKKIRQEYERKEKQVEIRKKIEYSMQLNASRIKVLQAQDDLVSNMMEAASKEVLNVSRDHNSYKKLLKGLIVQSLLRLKEPAVLLRCRKDDHHLVESVLESAKEEYAQKLQVHPPEIIVDHHIYLPPGPGHHNAHGPSCSGGVVVASRDGKIVCENTLDARLDVVFRKKLPEIRKQLVSQVAA.

The protein belongs to the V-ATPase E subunit family. As to quaternary structure, V-ATPase is a heteromultimeric enzyme composed of a peripheral catalytic V1 complex (components A to H) attached to an integral membrane V0 proton pore complex (components: a, c, c', c'' and d).

Subunit of the peripheral V1 complex of vacuolar ATPase essential for assembly or catalytic function. V-ATPase is responsible for acidifying a variety of intracellular compartments in eukaryotic cells. In Citrus unshiu (Satsuma mandarin), this protein is V-type proton ATPase subunit E (VATE).